Here is a 346-residue protein sequence, read N- to C-terminus: Cyclin-dependent kinase 20 (346 aa).

The Protein kinase domain maps to 4-288; it reads YCILGRIGEG…ASQALLHQYF (285 aa). Residues 10–18 and Lys-33 each bind ATP; that span reads IGEGAHGIV. The active-site Proton acceptor is the Asp-127. The segment at 298–324 is disordered; that stretch reads SELPIPQRPGGPAPKAHPGPPHVHDFH. A compositionally biased stretch (pro residues) spans 303–318; the sequence is PQRPGGPAPKAHPGPP.

It belongs to the protein kinase superfamily. CMGC Ser/Thr protein kinase family. CDC2/CDKX subfamily. Monomer. Interacts with MAK. Interacts with TBC1D32.

Its subcellular location is the nucleus. It localises to the cytoplasm. The protein resides in the cell projection. It is found in the cilium. It catalyses the reaction L-seryl-[protein] + ATP = O-phospho-L-seryl-[protein] + ADP + H(+). It carries out the reaction L-threonyl-[protein] + ATP = O-phospho-L-threonyl-[protein] + ADP + H(+). Functionally, involved in cell growth. Activates CDK2, a kinase involved in the control of the cell cycle, by phosphorylating residue 'Thr-160'. Required for high-level Shh responses in the developing neural tube. Together with TBC1D32, controls the structure of the primary cilium by coordinating assembly of the ciliary membrane and axoneme, allowing GLI2 to be properly activated in response to SHH signaling. This chain is Cyclin-dependent kinase 20 (Cdk20), found in Mus musculus (Mouse).